Reading from the N-terminus, the 460-residue chain is Ammonium transporter Rh type C (460 aa).

The Cytoplasmic portion of the chain corresponds to 1-9 (MVWNTNLRW). Residues 10–30 (RLPVTCLLLQVALVVLFGVFV) form a helical membrane-spanning segment. Residues 31 to 61 (RYDMDADPHWIDKKEAENSTSDMENEFYYRY) are Extracellular-facing. Residue Asn48 is glycosylated (N-linked (GlcNAc...) asparagine). The helical transmembrane segment at 62 to 82 (PSFQDVHVMIFVGFGFLMTFL) threads the bilayer. The Cytoplasmic portion of the chain corresponds to 83–90 (QRYGYSSV). The helical transmembrane segment at 91–111 (GFNFLLAAFGIQWALLLQGWF) threads the bilayer. Residues 112–125 (HSYYRGYIRVGVEN) lie on the Extracellular side of the membrane. A helical membrane pass occupies residues 126–145 (LINADFCVGSVCVAFGAVLG). Over 146-151 (KVSPVQ) the chain is Cytoplasmic. Residues 152–174 (LLIMTLFQVTLFSVNEFILLNLL) traverse the membrane as a helical segment. Residues 175-179 (EVKDA) are Extracellular-facing. Residues 180–200 (GGSMTIHTFGAYFGLTVTWIL) form a helical membrane-spanning segment. At 201 to 219 (YRPGLHQSKERQSSVYHSD) the chain is on the cytoplasmic side. A helical transmembrane segment spans residues 220 to 240 (LFAMIGTLFLWMYWPSFNSAV). The Extracellular segment spans residues 241–251 (SNHGDAQHRAA). A helical membrane pass occupies residues 252 to 272 (INTYCSLAACVLTSVALSSAL). Topologically, residues 273 to 285 (HKKGKLDMVHIQN) are cytoplasmic. Residues 286 to 306 (ATLAGGVAVGTAAEMMLMPYG) traverse the membrane as a helical segment. Residue Ser307 is a topological domain, extracellular. Residues 308 to 328 (LIVGFICGIVSTLGFVYLTPF) form a helical membrane-spanning segment. Residues 329–339 (LESRLRVQDTC) are Cytoplasmic-facing. A helical transmembrane segment spans residues 340 to 360 (GIHNLHGIPGIIGAIVGAVTA). The Extracellular segment spans residues 361-396 (SCANTDVYGVNGLTQAFGFDGFKTNRTPSMQGKFQA). Residues 397-417 (AGLFVSLAMALVGGIIVGIIL) form a helical membrane-spanning segment. Topologically, residues 418 to 460 (KLPFWGQPADENCFEDAIYWEMPEEPKSTVLHPEDSTLKPSEP) are cytoplasmic.

The protein belongs to the ammonium transporter (TC 2.A.49) family. Rh subfamily. Homotrimer. Post-translationally, N-glycosylated.

It localises to the apical cell membrane. The enzyme catalyses NH4(+)(in) = NH4(+)(out). It catalyses the reaction methylamine(out) = methylamine(in). It carries out the reaction CO2(out) = CO2(in). Ammonium transporter involved in the maintenance of acid-base homeostasis. Transports ammonium and its related derivative methylammonium across the plasma membrane of epithelial cells likely contributing to renal transepithelial ammonia transport and ammonia metabolism. Postulated to primarily mediate an electroneutral bidirectional transport of NH3 ammonia species according to a mechanism that implies interaction of an NH4(+) ion with acidic residues of the pore entry followed by dissociation of NH4(+) into NH3 and H(+). As a result NH3 transits through the central pore and is protonated on the extracellular side reforming NH4(+). May act as a CO2 channel providing for renal acid secretion. The polypeptide is Ammonium transporter Rh type C (RHCG) (Canis lupus familiaris (Dog)).